The following is a 468-amino-acid chain: 6-phosphogluconate dehydrogenase, decarboxylating (468 aa).

NADP(+) is bound by residues 10 to 15 (GMAVMG), 33 to 35 (NRS), 74 to 76 (IKS), and Asn-102. Substrate-binding positions include Asn-102 and 128–130 (SGG). Lys-182 acts as the Proton acceptor in catalysis. A substrate-binding site is contributed by 185–186 (HN). The active-site Proton donor is the Glu-189. Positions 190, 259, 286, 445, and 451 each coordinate substrate.

The protein belongs to the 6-phosphogluconate dehydrogenase family. In terms of assembly, homodimer.

It carries out the reaction 6-phospho-D-gluconate + NADP(+) = D-ribulose 5-phosphate + CO2 + NADPH. It functions in the pathway carbohydrate degradation; pentose phosphate pathway; D-ribulose 5-phosphate from D-glucose 6-phosphate (oxidative stage): step 3/3. Catalyzes the oxidative decarboxylation of 6-phosphogluconate to ribulose 5-phosphate and CO(2), with concomitant reduction of NADP to NADPH. The chain is 6-phosphogluconate dehydrogenase, decarboxylating (gnd) from Buchnera aphidicola subsp. Baizongia pistaciae (strain Bp).